A 527-amino-acid chain; its full sequence is Glucose-6-phosphate isomerase (527 aa).

The active-site Proton donor is the Glu323. Active-site residues include His352 and Lys454.

This sequence belongs to the GPI family.

It localises to the cytoplasm. The enzyme catalyses alpha-D-glucose 6-phosphate = beta-D-fructose 6-phosphate. Its pathway is carbohydrate biosynthesis; gluconeogenesis. The protein operates within carbohydrate degradation; glycolysis; D-glyceraldehyde 3-phosphate and glycerone phosphate from D-glucose: step 2/4. Functionally, catalyzes the reversible isomerization of glucose-6-phosphate to fructose-6-phosphate. This is Glucose-6-phosphate isomerase from Prochlorococcus marinus (strain MIT 9312).